We begin with the raw amino-acid sequence, 371 residues long: Cytoplasmic tRNA 2-thiolation protein 1 (371 aa).

This sequence belongs to the TtcA family. CTU1/NCS6/ATPBD3 subfamily.

The protein resides in the cytoplasm. It participates in tRNA modification; 5-methoxycarbonylmethyl-2-thiouridine-tRNA biosynthesis. Plays a central role in 2-thiolation of mcm(5)S(2)U at tRNA wobble positions of tRNA(Lys), tRNA(Glu) and tRNA(Gln). Directly binds tRNAs and probably acts by catalyzing adenylation of tRNAs, an intermediate required for 2-thiolation. It is unclear whether it acts as a sulfurtransferase that transfers sulfur from thiocarboxylated URM1 onto the uridine of tRNAs at wobble position. Prior mcm(5) tRNA modification by the elongator complex is required for 2-thiolation. May also be involved in protein urmylation. This chain is Cytoplasmic tRNA 2-thiolation protein 1, found in Kluyveromyces lactis (strain ATCC 8585 / CBS 2359 / DSM 70799 / NBRC 1267 / NRRL Y-1140 / WM37) (Yeast).